Reading from the N-terminus, the 222-residue chain is Putative thymidylate synthase (222 aa).

Cys146 is a catalytic residue.

Belongs to the thymidylate synthase family. Archaeal-type ThyA subfamily. As to quaternary structure, monomer.

It is found in the cytoplasm. It participates in pyrimidine metabolism; dTTP biosynthesis. In terms of biological role, may catalyze the biosynthesis of dTMP using an unknown cosubstrate. The chain is Putative thymidylate synthase from Methanothermobacter thermautotrophicus (strain ATCC 29096 / DSM 1053 / JCM 10044 / NBRC 100330 / Delta H) (Methanobacterium thermoautotrophicum).